The chain runs to 452 residues: Glucose-6-phosphate isomerase (452 aa).

Catalysis depends on E290, which acts as the Proton donor. Residues H311 and K425 contribute to the active site.

The protein belongs to the GPI family.

The protein resides in the cytoplasm. The catalysed reaction is alpha-D-glucose 6-phosphate = beta-D-fructose 6-phosphate. Its pathway is carbohydrate biosynthesis; gluconeogenesis. It functions in the pathway carbohydrate degradation; glycolysis; D-glyceraldehyde 3-phosphate and glycerone phosphate from D-glucose: step 2/4. Its function is as follows. Catalyzes the reversible isomerization of glucose-6-phosphate to fructose-6-phosphate. The protein is Glucose-6-phosphate isomerase of Limosilactobacillus reuteri (strain DSM 20016) (Lactobacillus reuteri).